The chain runs to 129 residues: Glycine cleavage system H protein (129 aa).

The region spanning 24–106 is the Lipoyl-binding domain; it reads EAVVGITEHA…YGAGWLFRIK (83 aa). The residue at position 65 (K65) is an N6-lipoyllysine.

This sequence belongs to the GcvH family. In terms of assembly, the glycine cleavage system is composed of four proteins: P, T, L and H. It depends on (R)-lipoate as a cofactor.

The glycine cleavage system catalyzes the degradation of glycine. The H protein shuttles the methylamine group of glycine from the P protein to the T protein. In Aeromonas hydrophila subsp. hydrophila (strain ATCC 7966 / DSM 30187 / BCRC 13018 / CCUG 14551 / JCM 1027 / KCTC 2358 / NCIMB 9240 / NCTC 8049), this protein is Glycine cleavage system H protein.